Consider the following 144-residue polypeptide: 3-hydroxyacyl-[acyl-carrier-protein] dehydratase FabZ (144 aa).

H49 is a catalytic residue.

It belongs to the thioester dehydratase family. FabZ subfamily.

It is found in the cytoplasm. The catalysed reaction is a (3R)-hydroxyacyl-[ACP] = a (2E)-enoyl-[ACP] + H2O. In terms of biological role, involved in unsaturated fatty acids biosynthesis. Catalyzes the dehydration of short chain beta-hydroxyacyl-ACPs and long chain saturated and unsaturated beta-hydroxyacyl-ACPs. This is 3-hydroxyacyl-[acyl-carrier-protein] dehydratase FabZ from Clostridium kluyveri (strain NBRC 12016).